The sequence spans 559 residues: Large neutral amino acids transporter small subunit 3 (559 aa).

A helical transmembrane segment spans residues 20–40; the sequence is VLENLFFSAVLLGWGSLLIIL. A glycan (N-linked (GlcNAc...) asparagine) is linked at Asn57. 5 helical membrane passes run 78 to 98, 105 to 124, 131 to 151, 168 to 188, and 191 to 211; these read LGFT…GILM, PVRL…MALA, LSPL…CLTF, MALM…IKLI, and AGVA…LIFL. 2 N-linked (GlcNAc...) asparagine glycosylation sites follow: Asn212 and Asn229. Ser237, Ser262, and Ser267 each carry phosphoserine. 6 consecutive transmembrane segments (helical) span residues 304–324, 357–377, 419–439, 446–466, 485–505, and 510–530; these read FLWS…YMAA, SVFG…GYIM, AISA…TCLI, FVTF…CGSL, LISA…VGPL, and FWVN…PSYL.

It belongs to the SLC43A transporter (TC 2.A.1.44) family. In terms of tissue distribution, ubiquitously expressed in fetus and adult. Highest expression in adult pancreas, liver, skeletal muscle. In fetus, highest expression in liver and lower levels in kidney, and lung. Exclusively expressed in the glomeruli along the glomerular capillary walls.

It localises to the cell membrane. The protein resides in the apical cell membrane. It is found in the endoplasmic reticulum membrane. It carries out the reaction D-leucine(in) = D-leucine(out). The enzyme catalyses L-leucine(in) = L-leucine(out). The catalysed reaction is L-isoleucine(in) = L-isoleucine(out). It catalyses the reaction L-methionine(in) = L-methionine(out). It carries out the reaction L-phenylalanine(in) = L-phenylalanine(out). The enzyme catalyses L-valine(in) = L-valine(out). Its function is as follows. Uniport that mediates the transport of neutral amino acids such as L-leucine, L-isoleucine, L-valine, and L-phenylalanine. The transport activity is sodium ions-independent, electroneutral and mediated by a facilitated diffusion. In Homo sapiens (Human), this protein is Large neutral amino acids transporter small subunit 3.